A 396-amino-acid chain; its full sequence is Elongation factor Tu 1 (396 aa).

The tr-type G domain occupies 10–206; it reads KPHCNIGTIG…TVDDYIPQPD (197 aa). Residues 19–26 form a G1 region; the sequence is GHVDHGKT. 19–26 contributes to the GTP binding site; that stretch reads GHVDHGKT. Thr-26 contacts Mg(2+). The interval 60-64 is G2; that stretch reads GITIN. Residues 81-84 form a G3 region; the sequence is DCPG. Residues 81 to 85 and 136 to 139 contribute to the GTP site; these read DCPGH and NKVD. The G4 stretch occupies residues 136 to 139; sequence NKVD. Residues 174 to 176 form a G5 region; the sequence is SAK.

This sequence belongs to the TRAFAC class translation factor GTPase superfamily. Classic translation factor GTPase family. EF-Tu/EF-1A subfamily. As to quaternary structure, monomer.

The protein localises to the cytoplasm. The catalysed reaction is GTP + H2O = GDP + phosphate + H(+). In terms of biological role, GTP hydrolase that promotes the GTP-dependent binding of aminoacyl-tRNA to the A-site of ribosomes during protein biosynthesis. In Caulobacter sp. (strain K31), this protein is Elongation factor Tu 1.